The sequence spans 406 residues: MSSEAKTLQAIKFDRETKTLDILDQLLIPYATEYISIKSIEDAYQAIKLMQVRGAPAIAIVGAFSIVVDVYNNLKETKEKSRTIGDLVESIHYLITARPTAVNLSNACLDIEKLILTEFKKDELVNQHTFDIVYQYSVALYDDDLDNNFKIGDNGLHYIVETLKSQSFTGPFSIITICNTGSLATSGHGTALGIIRTVFKKLSKDAGEKFWLEHVYPCETRPYNQGARLTTYELNYEGIPSTLVCDSMASSLIATLSKQRKVKSSTAPVKFIIAGADRIVENGDTANKIGTFQLSTIADYFNSRAEKENTIKFIIAAPRTTIDFKTKTGDGIIIEERPSQELTTLNGPVLTNNGVLEKQTVGIATPGIDVWNPAFDVTPHELIDCIVTEDTNAFVKNSEGDFNLKV.

Asp277 serves as the catalytic Proton donor.

This sequence belongs to the eIF-2B alpha/beta/delta subunits family. MtnA subfamily.

Its subcellular location is the cytoplasm. It localises to the nucleus. It carries out the reaction 5-(methylsulfanyl)-alpha-D-ribose 1-phosphate = 5-(methylsulfanyl)-D-ribulose 1-phosphate. The protein operates within amino-acid biosynthesis; L-methionine biosynthesis via salvage pathway; L-methionine from S-methyl-5-thio-alpha-D-ribose 1-phosphate: step 1/6. In terms of biological role, catalyzes the interconversion of methylthioribose-1-phosphate (MTR-1-P) into methylthioribulose-1-phosphate (MTRu-1-P). The protein is Methylthioribose-1-phosphate isomerase of Debaryomyces hansenii (strain ATCC 36239 / CBS 767 / BCRC 21394 / JCM 1990 / NBRC 0083 / IGC 2968) (Yeast).